Consider the following 365-residue polypeptide: Peptide chain release factor 2 (365 aa).

Q251 carries the post-translational modification N5-methylglutamine.

It belongs to the prokaryotic/mitochondrial release factor family. In terms of processing, methylated by PrmC. Methylation increases the termination efficiency of RF2.

It localises to the cytoplasm. Peptide chain release factor 2 directs the termination of translation in response to the peptide chain termination codons UGA and UAA. The sequence is that of Peptide chain release factor 2 from Campylobacter jejuni (strain RM1221).